Here is a 426-residue protein sequence, read N- to C-terminus: Probable indole-3-pyruvate monooxygenase YUCCA8 (426 aa).

Position 29-34 (29-34 (GAGPSG)) interacts with FAD. Position 199 to 204 (199 to 204 (GCGNSG)) interacts with NADP(+).

Belongs to the FMO family. It depends on FAD as a cofactor. As to expression, expressed in root tips and in hydathodes. Expressed in root vasculature and quiescent center, but not in the meristematic zone of the root tip.

The enzyme catalyses indole-3-pyruvate + NADPH + O2 + H(+) = (indol-3-yl)acetate + CO2 + NADP(+) + H2O. It participates in plant hormone metabolism; auxin biosynthesis. Involved in auxin biosynthesis. Belongs to the set of redundant YUCCA genes probably responsible for auxin biosynthesis in roots. The polypeptide is Probable indole-3-pyruvate monooxygenase YUCCA8 (YUC8) (Arabidopsis thaliana (Mouse-ear cress)).